The chain runs to 22 residues: Thylakoid lumenal 11 kDa protein (22 aa).

The disordered stretch occupies residues 1-22; it reads FKGGGPYGQGVTRGQDLSGKDF.

To A.thaliana At2g44920.

It localises to the plastid. Its subcellular location is the chloroplast thylakoid lumen. The protein is Thylakoid lumenal 11 kDa protein of Spinacia oleracea (Spinach).